The sequence spans 85 residues: Beta-defensin 18 (85 aa).

The signal sequence occupies residues 1–23 (MQSTMKMFGIILMVIFSVSCGPS). Cystine bridges form between cysteine 39–cysteine 65, cysteine 46–cysteine 60, and cysteine 50–cysteine 66.

Belongs to the beta-defensin family.

The protein localises to the secreted. Its function is as follows. Has antibacterial activity. This is Beta-defensin 18 (Defb18) from Mus musculus (Mouse).